Consider the following 243-residue polypeptide: Carboxy-S-adenosyl-L-methionine synthase (243 aa).

S-adenosyl-L-methionine-binding positions include tyrosine 40, 65-67 (GCS), 90-91 (DN), 118-119 (DI), asparagine 133, and arginine 200.

This sequence belongs to the class I-like SAM-binding methyltransferase superfamily. Cx-SAM synthase family. In terms of assembly, homodimer.

The catalysed reaction is prephenate + S-adenosyl-L-methionine = carboxy-S-adenosyl-L-methionine + 3-phenylpyruvate + H2O. In terms of biological role, catalyzes the conversion of S-adenosyl-L-methionine (SAM) to carboxy-S-adenosyl-L-methionine (Cx-SAM). The sequence is that of Carboxy-S-adenosyl-L-methionine synthase from Shewanella halifaxensis (strain HAW-EB4).